A 380-amino-acid chain; its full sequence is Geranylgeranyl pyrophosphate synthase cle6 (380 aa).

Positions 1–19 (MHSVRTSTTSTSSMVSSTM) are enriched in low complexity. A disordered region spans residues 1–55 (MHSVRTSTTSTSSMVSSTMHPFDAFNAPQPYQQHHPPRWNIHNPHFSQTNGHSIQ). The span at 45 to 55 (HFSQTNGHSIQ) shows a compositional bias: polar residues. Residues Lys-102, Arg-105, and His-134 each contribute to the isopentenyl diphosphate site. Mg(2+) is bound by residues Asp-141 and Asp-145. Arg-150 contacts dimethylallyl diphosphate. Arg-151 serves as a coordination point for isopentenyl diphosphate. Positions 229, 230, and 263 each coordinate dimethylallyl diphosphate. A Mg(2+)-binding site is contributed by Asp-266. Positions 270, 280, and 290 each coordinate dimethylallyl diphosphate.

This sequence belongs to the FPP/GGPP synthase family. The cofactor is Mg(2+).

It carries out the reaction isopentenyl diphosphate + dimethylallyl diphosphate = (2E)-geranyl diphosphate + diphosphate. The catalysed reaction is isopentenyl diphosphate + (2E)-geranyl diphosphate = (2E,6E)-farnesyl diphosphate + diphosphate. It catalyses the reaction isopentenyl diphosphate + (2E,6E)-farnesyl diphosphate = (2E,6E,10E)-geranylgeranyl diphosphate + diphosphate. The protein operates within secondary metabolite biosynthesis; terpenoid biosynthesis. Geranylgeranyl pyrophosphate synthase; part of the cluster A that mediates the biosynthesis of chevalone E and its oxidized derivatives that possess a unique five-membered lactone ring and can synergistically enhance the cytotoxicity of doxorubicin (DOX) in breast cancer cells. Within the pathway, cle6 takes part to the biosynthesis of the molecular scaffold by providing geranylgeranyl pyrophosphate (GGPP) to the prenyltransferase cle5 for C-3 geranylgeranylation of triacetic acid lactone. The molecular scaffold is commonly biosynthesized by a series of enzymes including the non-reducing polyketide synthase (NR-PKS) cle1 that produces the alpha-pyrone triacetic acid lactone (TAL); The membrane-bound prenyltransferase cle5 that accepts TAL as its substrate to perform a C-3 geranylgeranylation reaction, in which the pathway-dedicated GGPS cle6 is required to provide GGPP, the other substrate of cle5; the FAD-dependent monooxygenase Cle3 that forms an (S)-epoxide ring at the terminal olefin of the geranylgeranyl group; and the terpene cyclase Cle7 that catalyzes the cyclization of the prenyl group that yields the pentacyclic pathway intermediate chevalone E. Chevalone E can derivatize into seven new oxidized analogs by the cytochrome P450 monooxygenases cle2 (acting at C-20) and cle4 (acting at C-11 and C-12). The protein is Geranylgeranyl pyrophosphate synthase cle6 of Aspergillus versicolor.